The chain runs to 160 residues: MARNPRGGKQIVATNRKARHDYAIIELFEAGVALLGTEVKSLREGHASLADAFATVDSGEVWLRNMHIPEYQHGSWTNHDPRRNRKLLLHRRQIDTLVGKIRDGNLALVPLSLYFAEGKVKVELALARGKKLHDKRQDMARRDAQREVIRELGRRAKGML.

It belongs to the SmpB family.

It is found in the cytoplasm. Functionally, required for rescue of stalled ribosomes mediated by trans-translation. Binds to transfer-messenger RNA (tmRNA), required for stable association of tmRNA with ribosomes. tmRNA and SmpB together mimic tRNA shape, replacing the anticodon stem-loop with SmpB. tmRNA is encoded by the ssrA gene; the 2 termini fold to resemble tRNA(Ala) and it encodes a 'tag peptide', a short internal open reading frame. During trans-translation Ala-aminoacylated tmRNA acts like a tRNA, entering the A-site of stalled ribosomes, displacing the stalled mRNA. The ribosome then switches to translate the ORF on the tmRNA; the nascent peptide is terminated with the 'tag peptide' encoded by the tmRNA and targeted for degradation. The ribosome is freed to recommence translation, which seems to be the essential function of trans-translation. This is SsrA-binding protein from Mycobacterium leprae (strain Br4923).